Consider the following 190-residue polypeptide: MNPISLLFLALAMSTDAFAAALGKGASLHKPRFIEALRTGLIFGAIETITPVIGWGIGQVAARFAESWDHWIAFTLLLVLGLHMIYNGLKHDHEEEQEKPGSHSFWILAVTAFATSIDALAVGVGLAFVDVNIMVAALAIGLATTVMVTIGVMLGRVLGTMVGKRAEIVGGIVLIVVGTTILYEHLTAAA.

The next 6 membrane-spanning stretches (helical) occupy residues 3 to 23 (PISL…AALG), 41 to 61 (LIFG…GQVA), 69 to 89 (DHWI…YNGL), 105 to 125 (FWIL…VGVG), 133 to 153 (IMVA…IGVM), and 168 to 188 (IVGG…HLTA).

The protein belongs to the MntP (TC 9.B.29) family.

The protein resides in the cell inner membrane. In terms of biological role, probably functions as a manganese efflux pump. The polypeptide is Putative manganese efflux pump MntP (Pseudomonas syringae pv. tomato (strain ATCC BAA-871 / DC3000)).